The following is a 99-amino-acid chain: MEVKTFAFLQIAVCIAIGIELICAGTNALNDEELFTVDYCGTNCTQQPNGSWTTCPGNCSCYHEDGKTDGFCLSTEYTDFTQFPNLTSEEMDAATPRPE.

Residues 1-28 (MEVKTFAFLQIAVCIAIGIELICAGTNA) form the signal peptide. Intrachain disulfides connect Cys40/Cys59, Cys44/Cys61, and Cys55/Cys72. N-linked (GlcNAc...) asparagine glycosylation is found at Asn43, Asn49, Asn58, and Asn85.

The protein localises to the secreted. Its function is as follows. Salivary chemokine-binding protein which binds to host chemokines CXCL1, CXCL2, CXCL3, CXCL5 and CXCL8. The protein is Evasin P1162 of Ixodes ricinus (Common tick).